The primary structure comprises 122 residues: Large ribosomal subunit protein uL14 (122 aa).

It belongs to the universal ribosomal protein uL14 family. Part of the 50S ribosomal subunit. Forms a cluster with proteins L3 and L19. In the 70S ribosome, L14 and L19 interact and together make contacts with the 16S rRNA in bridges B5 and B8.

Functionally, binds to 23S rRNA. Forms part of two intersubunit bridges in the 70S ribosome. The polypeptide is Large ribosomal subunit protein uL14 (Chlamydia trachomatis serovar L2 (strain ATCC VR-902B / DSM 19102 / 434/Bu)).